A 418-amino-acid chain; its full sequence is NADH-quinone oxidoreductase subunit D (418 aa).

It belongs to the complex I 49 kDa subunit family. As to quaternary structure, NDH-1 is composed of 14 different subunits. Subunits NuoB, C, D, E, F, and G constitute the peripheral sector of the complex.

It is found in the cell inner membrane. The catalysed reaction is a quinone + NADH + 5 H(+)(in) = a quinol + NAD(+) + 4 H(+)(out). Functionally, NDH-1 shuttles electrons from NADH, via FMN and iron-sulfur (Fe-S) centers, to quinones in the respiratory chain. The immediate electron acceptor for the enzyme in this species is believed to be ubiquinone. Couples the redox reaction to proton translocation (for every two electrons transferred, four hydrogen ions are translocated across the cytoplasmic membrane), and thus conserves the redox energy in a proton gradient. In Neisseria meningitidis serogroup C / serotype 2a (strain ATCC 700532 / DSM 15464 / FAM18), this protein is NADH-quinone oxidoreductase subunit D.